Consider the following 515-residue polypeptide: Lysine--tRNA ligase (515 aa).

Mg(2+) contacts are provided by Glu425 and Glu432.

Belongs to the class-II aminoacyl-tRNA synthetase family. In terms of assembly, homodimer. It depends on Mg(2+) as a cofactor.

It localises to the cytoplasm. It catalyses the reaction tRNA(Lys) + L-lysine + ATP = L-lysyl-tRNA(Lys) + AMP + diphosphate. The protein is Lysine--tRNA ligase of Cupriavidus metallidurans (strain ATCC 43123 / DSM 2839 / NBRC 102507 / CH34) (Ralstonia metallidurans).